The following is a 185-amino-acid chain: Ribose 1,5-bisphosphate phosphokinase PhnN (185 aa).

ATP is bound at residue 13–20; it reads GPSGAGKD.

Belongs to the ribose 1,5-bisphosphokinase family.

It carries out the reaction alpha-D-ribose 1,5-bisphosphate + ATP = 5-phospho-alpha-D-ribose 1-diphosphate + ADP. The protein operates within metabolic intermediate biosynthesis; 5-phospho-alpha-D-ribose 1-diphosphate biosynthesis; 5-phospho-alpha-D-ribose 1-diphosphate from D-ribose 5-phosphate (route II): step 3/3. Its function is as follows. Catalyzes the phosphorylation of ribose 1,5-bisphosphate to 5-phospho-D-ribosyl alpha-1-diphosphate (PRPP). The chain is Ribose 1,5-bisphosphate phosphokinase PhnN from Chromobacterium violaceum (strain ATCC 12472 / DSM 30191 / JCM 1249 / CCUG 213 / NBRC 12614 / NCIMB 9131 / NCTC 9757 / MK).